Consider the following 435-residue polypeptide: Gamma-glutamyl phosphate reductase (435 aa).

The protein belongs to the gamma-glutamyl phosphate reductase family.

Its subcellular location is the cytoplasm. The enzyme catalyses L-glutamate 5-semialdehyde + phosphate + NADP(+) = L-glutamyl 5-phosphate + NADPH + H(+). It participates in amino-acid biosynthesis; L-proline biosynthesis; L-glutamate 5-semialdehyde from L-glutamate: step 2/2. Functionally, catalyzes the NADPH-dependent reduction of L-glutamate 5-phosphate into L-glutamate 5-semialdehyde and phosphate. The product spontaneously undergoes cyclization to form 1-pyrroline-5-carboxylate. This chain is Gamma-glutamyl phosphate reductase, found in Aquifex aeolicus (strain VF5).